We begin with the raw amino-acid sequence, 150 residues long: Probable cyclic pyranopterin monophosphate synthase (150 aa).

Residues 68 to 70 (YCH) and 104 to 105 (ME) each bind substrate. Aspartate 119 is a catalytic residue.

Belongs to the MoaC family. In terms of assembly, homohexamer; trimer of dimers.

The catalysed reaction is (8S)-3',8-cyclo-7,8-dihydroguanosine 5'-triphosphate = cyclic pyranopterin phosphate + diphosphate. It participates in cofactor biosynthesis; molybdopterin biosynthesis. In terms of biological role, catalyzes the conversion of (8S)-3',8-cyclo-7,8-dihydroguanosine 5'-triphosphate to cyclic pyranopterin monophosphate (cPMP). The chain is Probable cyclic pyranopterin monophosphate synthase from Thermoplasma volcanium (strain ATCC 51530 / DSM 4299 / JCM 9571 / NBRC 15438 / GSS1).